Reading from the N-terminus, the 434-residue chain is Polyadenylate-binding protein RBP47C' (434 aa).

A disordered region spans residues 1–50 (MADVKVQSESESSDSHPLVDYQSLPPYPPPHPPVEVEENQPKTSPTPPPP). 3 RRM domains span residues 103-185 (KTIW…WASF), 199-278 (LSIF…PATP), and 306-378 (TTIF…WGRN).

Belongs to the polyadenylate-binding RBP47 family. In terms of assembly, interacts with the poly(A) tail of mRNA in nucleus.

It localises to the nucleus. Its subcellular location is the cytoplasmic granule. Heterogeneous nuclear ribonucleoprotein (hnRNP)-protein binding the poly(A) tail of mRNA and probably involved in some steps of pre-mRNA maturation. The protein is Polyadenylate-binding protein RBP47C' (RBP47C') of Arabidopsis thaliana (Mouse-ear cress).